Consider the following 33-residue polypeptide: pyr operon leader peptide (33 aa).

The chain is pyr operon leader peptide (pyrL) from Salmonella typhi.